Consider the following 1238-residue polypeptide: Cryptic loci regulator protein 1 (1238 aa).

6 disordered regions span residues 133-156 (TQQQ…TEPN), 196-237 (PFSN…PSSI), 277-303 (ASLY…LGSM), 546-568 (QKSV…IDTT), 696-735 (SDNT…PFVH), and 784-824 (TLKE…QSRS). Residues 214–223 (NVKNNSKKTA) show a composition bias toward polar residues. The span at 224–237 (SSVNSNHSSIPSSI) shows a compositional bias: low complexity. A compositionally biased stretch (polar residues) spans 291–303 (SSRNTSSYNLGSM). The segment covering 702 to 723 (SLPKPSNSKLSSISSDGDASSN) has biased composition (low complexity). Residues 785 to 796 (LKEDASSTKQAK) show a composition bias toward basic and acidic residues. Residues 810 to 819 (NDVSKNNSGE) are compositionally biased toward polar residues. The C2H2-type zinc-finger motif lies at 1062–1087 (LNCEVSNCKKCFSNYEDMFKHLQHSH).

In terms of assembly, interacts with clr3.

The protein resides in the nucleus. It localises to the chromosome. The protein localises to the centromere. It is found in the telomere. Regulates silencing of the mat2 and mat3 loci. Organizes the chromatin structure of the mating-type region where it also participates in establishing the 'cold spot' for recombination. Required for proper positioning of nucleosomes at heterochromatic loci and for transcriptional gene silencing (TGS) function of the Snf2/Hdac-containing repressor complex (SHREC). This Schizosaccharomyces pombe (strain 972 / ATCC 24843) (Fission yeast) protein is Cryptic loci regulator protein 1 (clr1).